A 69-amino-acid chain; its full sequence is UPF0434 protein Rmet_0534 (69 aa).

This sequence belongs to the UPF0434 family.

The chain is UPF0434 protein Rmet_0534 from Cupriavidus metallidurans (strain ATCC 43123 / DSM 2839 / NBRC 102507 / CH34) (Ralstonia metallidurans).